The sequence spans 944 residues: Isoleucine--tRNA ligase (944 aa).

The short motif at 58-68 is the 'HIGH' region element; that stretch reads PYANGSIHIGH. Glu-563 provides a ligand contact to L-isoleucyl-5'-AMP. The short motif at 604 to 608 is the 'KMSKS' region element; that stretch reads KMSKS. Lys-607 provides a ligand contact to ATP. Residues Cys-907, Cys-910, Cys-927, and Cys-930 each contribute to the Zn(2+) site.

It belongs to the class-I aminoacyl-tRNA synthetase family. IleS type 1 subfamily. As to quaternary structure, monomer. Zn(2+) serves as cofactor.

The protein resides in the cytoplasm. It carries out the reaction tRNA(Ile) + L-isoleucine + ATP = L-isoleucyl-tRNA(Ile) + AMP + diphosphate. In terms of biological role, catalyzes the attachment of isoleucine to tRNA(Ile). As IleRS can inadvertently accommodate and process structurally similar amino acids such as valine, to avoid such errors it has two additional distinct tRNA(Ile)-dependent editing activities. One activity is designated as 'pretransfer' editing and involves the hydrolysis of activated Val-AMP. The other activity is designated 'posttransfer' editing and involves deacylation of mischarged Val-tRNA(Ile). This Salmonella choleraesuis (strain SC-B67) protein is Isoleucine--tRNA ligase.